The sequence spans 383 residues: S-adenosylmethionine synthase (383 aa).

Histidine 15 lines the ATP pocket. Aspartate 17 is a binding site for Mg(2+). K(+) is bound at residue glutamate 43. L-methionine-binding residues include glutamate 56 and glutamine 99. The tract at residues 99 to 109 is flexible loop; that stretch reads QSPDINQGVDR. Residues 164-166, 230-231, aspartate 239, 245-246, alanine 262, and lysine 266 contribute to the ATP site; these read DAK, RF, and RK. Aspartate 239 is a binding site for L-methionine. Residue lysine 270 coordinates L-methionine.

Belongs to the AdoMet synthase family. As to quaternary structure, homotetramer; dimer of dimers. It depends on Mg(2+) as a cofactor. The cofactor is K(+).

The protein resides in the cytoplasm. It catalyses the reaction L-methionine + ATP + H2O = S-adenosyl-L-methionine + phosphate + diphosphate. The protein operates within amino-acid biosynthesis; S-adenosyl-L-methionine biosynthesis; S-adenosyl-L-methionine from L-methionine: step 1/1. Catalyzes the formation of S-adenosylmethionine (AdoMet) from methionine and ATP. The overall synthetic reaction is composed of two sequential steps, AdoMet formation and the subsequent tripolyphosphate hydrolysis which occurs prior to release of AdoMet from the enzyme. This chain is S-adenosylmethionine synthase, found in Shewanella putrefaciens (strain CN-32 / ATCC BAA-453).